The primary structure comprises 199 residues: UPF0637 protein YsbB (199 aa).

This sequence belongs to the UPF0637 family.

In Lactococcus lactis subsp. lactis (strain IL1403) (Streptococcus lactis), this protein is UPF0637 protein YsbB (ysbB).